The following is a 443-amino-acid chain: 26S proteasome regulatory subunit 4 homolog B (443 aa).

Disordered regions lie at residues 1 to 55 (MGQG…LPTV) and 87 to 108 (RLKP…LRGT). Basic and acidic residues-rich tracts occupy residues 12 to 28 (QGDR…KKFE) and 87 to 106 (RLKP…DDLR). ATP is bound at residue 229 to 236 (GEPGTGKT). Glycyl lysine isopeptide (Lys-Gly) (interchain with G-Cter in ubiquitin) cross-links involve residues Lys-296 and Lys-433.

This sequence belongs to the AAA ATPase family. Component of the 19S regulatory particle (RP/PA700) base subcomplex of the 26S proteasome. The 26S proteasome is composed of a core protease (CP), known as the 20S proteasome, capped at one or both ends by the 19S regulatory particle (RP/PA700). The RP/PA700 complex is composed of at least 17 different subunits in two subcomplexes, the base and the lid, which form the portions proximal and distal to the 20S proteolytic core, respectively. Preferentially expressed in the root and shoot apical meristem.

The protein localises to the cytoplasm. The protein resides in the nucleus. Functionally, the 26S protease is involved in the ATP-dependent degradation of ubiquitinated proteins. The regulatory (or ATPase) complex confers ATP dependency and substrate specificity to the 26S complex. Acts redundantly with RPT2A in the regulation of gametogenesis. With RPT2A plays a critical role in 26S proteasome assembly. The chain is 26S proteasome regulatory subunit 4 homolog B from Arabidopsis thaliana (Mouse-ear cress).